A 77-amino-acid chain; its full sequence is DNA-directed RNA polymerase subunit epsilon (77 aa).

The protein belongs to the RNA polymerase subunit epsilon family. In terms of assembly, RNAP is composed of a core of 2 alpha, a beta and a beta' subunit. The core is associated with a delta subunit, and at least one of epsilon or omega. When a sigma factor is associated with the core the holoenzyme is formed, which can initiate transcription.

The enzyme catalyses RNA(n) + a ribonucleoside 5'-triphosphate = RNA(n+1) + diphosphate. Its function is as follows. A non-essential component of RNA polymerase (RNAP). The chain is DNA-directed RNA polymerase subunit epsilon from Streptococcus pneumoniae serotype 2 (strain D39 / NCTC 7466).